The sequence spans 63 residues: Light-harvesting protein B-800/850 alpha chain (63 aa).

At 1-14 (MNNAKMWLVVKPTV) the chain is on the cytoplasmic side. A helical membrane pass occupies residues 15-35 (GIPLFLVACAIASFLVHLMLV). Histidine 31 lines the a bacteriochlorophyll pocket. Residues 36-63 (LTTGWMGDYYSGSFEAASLVSNATTLLS) are Periplasmic-facing.

This sequence belongs to the antenna complex alpha subunit family. The core complex is formed by different alpha and beta chains, binding bacteriochlorophyll molecules, and arranged most probably in tetrameric structures disposed around the reaction center. The non-pigmented gamma chains may constitute additional components.

It localises to the cell inner membrane. Its function is as follows. Antenna complexes are light-harvesting systems, which transfer the excitation energy to the reaction centers. The polypeptide is Light-harvesting protein B-800/850 alpha chain (pucA) (Rhodovulum sulfidophilum (Rhodobacter sulfidophilus)).